A 111-amino-acid polypeptide reads, in one-letter code: NADH-ubiquinone oxidoreductase chain 3 (111 aa).

The next 3 helical transmembrane spans lie at 2-22 (ILIWLSIFMLVFIMLTLGMFV), 54-74 (FFVITLIFLIFDVEIYLLLPM), and 82-102 (PTTYLIIFFTFILVAGVFYEW).

It belongs to the complex I subunit 3 family.

Its subcellular location is the mitochondrion membrane. It carries out the reaction a ubiquinone + NADH + 5 H(+)(in) = a ubiquinol + NAD(+) + 4 H(+)(out). In terms of biological role, core subunit of the mitochondrial membrane respiratory chain NADH dehydrogenase (Complex I) that is believed to belong to the minimal assembly required for catalysis. Complex I functions in the transfer of electrons from NADH to the respiratory chain. The immediate electron acceptor for the enzyme is believed to be ubiquinone. This Artemia franciscana (Brine shrimp) protein is NADH-ubiquinone oxidoreductase chain 3 (ND3).